The sequence spans 215 residues: uncharacterized protein (215 aa).

This is an uncharacterized protein from Acanthamoeba polyphaga (Amoeba).